A 121-amino-acid chain; its full sequence is uncharacterized protein (121 aa).

In terms of domain architecture, CHCH spans 43 to 86; it reads LKECSSHVAAFADCSKDKYISVVWECRELQQLMKNCLVEYTTSE. Short sequence motifs (cx9C motif) lie at residues 46-56 and 68-78; these read CSSHVAAFADC and CRELQQLMKNC. 2 disulfide bridges follow: Cys-46–Cys-78 and Cys-56–Cys-68.

The protein belongs to the CMC family.

This is an uncharacterized protein from Dictyostelium discoideum (Social amoeba).